The primary structure comprises 613 residues: Laccase 1 (613 aa).

A signal peptide spans methionine 1–alanine 20. 3 consecutive Plastocyanin-like domains span residues isoleucine 29–lysine 142, tyrosine 171–proline 359, and aspartate 468–glycine 598. Asparagine 74 carries an N-linked (GlcNAc...) asparagine glycan. Positions 78, 80, 122, and 124 each coordinate Cu cation. Residues asparagine 256, asparagine 279, and asparagine 484 are each glycosylated (N-linked (GlcNAc...) asparagine). Histidine 506, histidine 509, and histidine 511 together coordinate Cu cation. A glycan (N-linked (GlcNAc...) asparagine) is linked at asparagine 526. Cu cation contacts are provided by histidine 580, cysteine 581, histidine 582, and histidine 586.

It belongs to the multicopper oxidase family. Cu cation serves as cofactor.

The protein resides in the cell surface. It participates in pigment biosynthesis. In terms of biological role, laccase; part of the Pks1 gene cluster that mediates the biosynthesis of an anthraquinone derivative pigment that contributes to conidial pigmentation that provides protection from UV radiation, heat and cold stress. The polyketide synthase Pks1 produces 1-acetyl-2,4,6,8-tetrahydroxy-9,10-anthraquinone though condensation of acetyl-CoA with malonyl-CoA. The dehydratase EthD and the laccase Mlac1 further convert the anthraquinone derivative into the final conidial pigment. The chain is Laccase 1 from Metarhizium acridum (strain CQMa 102).